We begin with the raw amino-acid sequence, 332 residues long: Glyceraldehyde-3-phosphate dehydrogenase 1 (332 aa).

NAD(+)-binding positions include 11–12 (RI), aspartate 32, and arginine 77. Residues 148 to 150 (SCT), threonine 179, 208 to 209 (TG), and arginine 231 each bind D-glyceraldehyde 3-phosphate. Cysteine 149 (nucleophile) is an active-site residue. Asparagine 313 serves as a coordination point for NAD(+).

Belongs to the glyceraldehyde-3-phosphate dehydrogenase family. As to quaternary structure, homotetramer.

Its subcellular location is the cytoplasm. It catalyses the reaction D-glyceraldehyde 3-phosphate + phosphate + NAD(+) = (2R)-3-phospho-glyceroyl phosphate + NADH + H(+). It participates in carbohydrate degradation; glycolysis; pyruvate from D-glyceraldehyde 3-phosphate: step 1/5. This is Glyceraldehyde-3-phosphate dehydrogenase 1 (Gapdh1) from Drosophila melanogaster (Fruit fly).